The sequence spans 424 residues: Serine--tRNA ligase (424 aa).

231–233 (TAE) contacts L-serine. Residue 261-263 (RSE) participates in ATP binding. Glu284 contacts L-serine. 348–351 (ETSS) lines the ATP pocket. An L-serine-binding site is contributed by Ser383.

Belongs to the class-II aminoacyl-tRNA synthetase family. Type-1 seryl-tRNA synthetase subfamily. In terms of assembly, homodimer. The tRNA molecule binds across the dimer.

The protein resides in the cytoplasm. It carries out the reaction tRNA(Ser) + L-serine + ATP = L-seryl-tRNA(Ser) + AMP + diphosphate + H(+). The catalysed reaction is tRNA(Sec) + L-serine + ATP = L-seryl-tRNA(Sec) + AMP + diphosphate + H(+). The protein operates within aminoacyl-tRNA biosynthesis; selenocysteinyl-tRNA(Sec) biosynthesis; L-seryl-tRNA(Sec) from L-serine and tRNA(Sec): step 1/1. Functionally, catalyzes the attachment of serine to tRNA(Ser). Is also able to aminoacylate tRNA(Sec) with serine, to form the misacylated tRNA L-seryl-tRNA(Sec), which will be further converted into selenocysteinyl-tRNA(Sec). This Metamycoplasma arthritidis (strain 158L3-1) (Mycoplasma arthritidis) protein is Serine--tRNA ligase.